The sequence spans 842 residues: MVAFTIEQIRGLMDKVTNVRNMSVIAHVDHGKSTLSDSLVQKAGIISAAKAGDARFMDTRKDEQERGITIKSTAISLYASMTDEDVKDIKQKTDGNSFLVNLIDSPGHVDFSSEVTAALRVTDGALVVVDTVEGVCVQTETVLRQALGERIKPVVVINKVDRALLELQTTKEDLYQTFARTVESVNVIISTYCDPVLGDVQVYPQKGTVAFASGLHGWAFTVRQFANKYSKKFGVDKEKMMERLWGDSYFNPKTKKWTNKDKDADGKPLERAFNMFILDPIFRLFAAIMNFKKDEIPVLLEKLEIQLKGDEKDLEGKALLKVVMRKFLPAADALLEMIVLHLPSPVTAQAYRAETLYEGPSDDPFCTAIRNCDPNADLMLYVSKMVPTSDKGRFYAFGRVFAGTVKSGQKVRIQGPNYQVGKKEDLFLKSIQRTVLMMGRSVEQIDDCPAGNIIGLVGIDQFLLKSGTITTNEAAHNMKVMKFSVSPVVQVAVEVKNANDLPKLVEGLKRLSKSDPCVLTYMSESGEHIVAGTGELHLEICLQDLENDHAGVPLRISPPVVSYRETVEGESSMVALSKSPNKHNRIYVKAQPIDEEVSLDIENGVINPRDDFKARARILADKHGWDVVDARKIWCFGPDGNGPNLVVDQTKAVQYLNEIKDSVVAAFQWATKEGPIFGENCRSVRVNILDVTLHADAIHRGGGQIIPTMRRVTYASMLLAEPAIQEPVFLVEIQCPENAIGGIYSVLNKKRGQVISEEQRPGTPLFTVKAYLPVNESFGFTGELRQATGGQAFPQLIFDHWQVMSGDVTDENSKPGAIVKEKRVRAGLKPEVPEYTEYYDKL.

A tr-type G domain is found at 17–346 (TNVRNMSVIA…MIVLHLPSPV (330 aa)). GTP is bound by residues 26–33 (AHVDHGKS), 158–161 (NKVD), and 213–215 (SGL). Histidine 699 carries the post-translational modification Diphthamide.

The protein belongs to the TRAFAC class translation factor GTPase superfamily. Classic translation factor GTPase family. EF-G/EF-2 subfamily.

Its subcellular location is the cytoplasm. The enzyme catalyses GTP + H2O = GDP + phosphate + H(+). In terms of biological role, catalyzes the GTP-dependent ribosomal translocation step during translation elongation. During this step, the ribosome changes from the pre-translocational (PRE) to the post-translocational (POST) state as the newly formed A-site-bound peptidyl-tRNA and P-site-bound deacylated tRNA move to the P and E sites, respectively. Catalyzes the coordinated movement of the two tRNA molecules, the mRNA and conformational changes in the ribosome. The protein is Elongation factor 2 (EFT2) of Candida albicans (strain SC5314 / ATCC MYA-2876) (Yeast).